The following is a 503-amino-acid chain: ATP synthase subunit alpha (503 aa).

169–176 lines the ATP pocket; that stretch reads GDRQTGKT.

This sequence belongs to the ATPase alpha/beta chains family. In terms of assembly, F-type ATPases have 2 components, CF(1) - the catalytic core - and CF(0) - the membrane proton channel. CF(1) has five subunits: alpha(3), beta(3), gamma(1), delta(1), epsilon(1). CF(0) has three main subunits: a(1), b(2) and c(9-12). The alpha and beta chains form an alternating ring which encloses part of the gamma chain. CF(1) is attached to CF(0) by a central stalk formed by the gamma and epsilon chains, while a peripheral stalk is formed by the delta and b chains.

It is found in the cell membrane. The enzyme catalyses ATP + H2O + 4 H(+)(in) = ADP + phosphate + 5 H(+)(out). Its function is as follows. Produces ATP from ADP in the presence of a proton gradient across the membrane. The alpha chain is a regulatory subunit. The chain is ATP synthase subunit alpha from Macrococcus caseolyticus (strain JCSC5402) (Macrococcoides caseolyticum).